The chain runs to 171 residues: Spiderine-2a (171 aa).

The signal sequence occupies residues 1-18 (MKFALVLLGVCAFYLVNA). Positions 19 to 58 (TGDLETELEASELQELQEALDLIAETPLESLEAEELEEAR) are cleaved as a propeptide — removed in mature form. A linear cationic cytotoxin domain region spans residues 59–104 (KFKLPKINWGKLASKAKDVYKKGQKLAKNKNVKKALKYGKQLAENL). Residues 118–171 (NNKCWAIGTRCTDDCDCCPEHHCHCPAKSWTFGLIPCSCQVTESDKVNKCPPAE) enclose the Oxytoxin-type inhibitor cystine knot (ICK) domain. Intrachain disulfides connect Cys121-Cys135, Cys128-Cys140, Cys132-Cys167, Cys134-Cys156, and Cys142-Cys154.

Post-translationally, disulfide bonds. Expressed by the venom gland.

The protein resides in the secreted. Its function is as follows. Has antimicrobial, insecticidal, cytolytic and cytotoxic activity. The chain is Spiderine-2a from Oxyopes takobius (Lynx spider).